A 260-amino-acid chain; its full sequence is Indole-3-glycerol phosphate synthase (260 aa).

This sequence belongs to the TrpC family.

It carries out the reaction 1-(2-carboxyphenylamino)-1-deoxy-D-ribulose 5-phosphate + H(+) = (1S,2R)-1-C-(indol-3-yl)glycerol 3-phosphate + CO2 + H2O. It functions in the pathway amino-acid biosynthesis; L-tryptophan biosynthesis; L-tryptophan from chorismate: step 4/5. The protein is Indole-3-glycerol phosphate synthase of Nocardioides sp. (strain ATCC BAA-499 / JS614).